The sequence spans 1075 residues: Protein EXPORTIN 1A (1075 aa).

An Importin N-terminal domain is found at 37-103; it reads ADQILRDLQA…KNYISEVIVQ (67 aa). HEAT repeat units lie at residues 91–130, 135–171, 232–267, 336–373, 388–425, 474–513, 563–600, 612–649, 682–719, 756–793, 798–835, and 894–934; these read DGMKNYISEVIVQLSSNEASFRSERLYVNKLNVILVQIVK, AKWTSFIPDLVAAAKTSETICENCMAILKLLSEEVFD, IFESTLLETLLKFFPVPAYRNLTIQCLTEVAALNFG, SLLLAGLEYLINISYVDDTEVFKVCLDYWNSLVLELFD, MGLQPFLPGMVDGLGSQVMQRRQLYSHPMSKLRGLMIN, DTEKQMLRKLNKQLSGEEWAWNNLNTLCWAIGSISGSMAE, KFLKTVVNKLFEFMHETHPGVQDMACDTFLKIVQKCKR, PFVSELLTGLATTVQDLEPHQIHSFYESVGNMIQAESD, LKDQVVIRTVLNILQTNTSAATSLGTYFLSQISLIFLD, RETLKLIETFLDKAEDQPHIGKQFVPPMMESVLGDYAR, ARESEVLSLFATIINKYKATMLDDVPHIFEAVFQCTLE, and ETGL…VLTD.

Belongs to the exportin family. Interacts with RAN1. In terms of tissue distribution, expressed ubiquitously, with higher levels in stems, inflorescences and roots. Present in mature pollen grains, unpollinated pistils, and 2-week-old seedlings.

It is found in the nucleus. The protein localises to the nuclear pore complex. Its subcellular location is the nucleus membrane. In terms of biological role, receptor for the leucine-rich nuclear export signal (NES). Binds cooperatively to the NES on its target protein and to the small GTPase Ran in its active GTP-bound form. Required for the maternal-to-embryonic transition and during gametophyte development. Involved in heat-induced oxidative stress basal resistance. This Arabidopsis thaliana (Mouse-ear cress) protein is Protein EXPORTIN 1A.